We begin with the raw amino-acid sequence, 467 residues long: MAP kinase-interacting serine/threonine-protein kinase 2 (467 aa).

One can recognise a Protein kinase domain in the interval 83-367; the sequence is QLQQEILGEG…AAQVLQHPWV (285 aa). Residues 89-97 and K112 each bind ATP; that span reads LGEGAYAKV. The active-site Proton acceptor is the D204. The Zn(2+) site is built by C298, C310, and C313. Residues 432-467 form a disordered region; sequence MQLSPPSESKLAKRRQQGSKGGISPPSLAPLLIVSD.

Belongs to the protein kinase superfamily. CAMK Ser/Thr protein kinase family. The cofactor is Mg(2+). Requires Zn(2+) as cofactor.

It carries out the reaction L-seryl-[protein] + ATP = O-phospho-L-seryl-[protein] + ADP + H(+). The catalysed reaction is L-threonyl-[protein] + ATP = O-phospho-L-threonyl-[protein] + ADP + H(+). Its function is as follows. May play a role in the response to environmental stress and cytokines. Appears to regulate translation by phosphorylating EIF4E, thus increasing the affinity of this protein for the 7-methylguanosine-containing mRNA cap. This Xenopus laevis (African clawed frog) protein is MAP kinase-interacting serine/threonine-protein kinase 2 (mknk2).